The following is a 471-amino-acid chain: Heat shock 70 kDa protein 13 (471 aa).

The N-terminal stretch at 1 to 22 (MAGEMTILGSAVLTLLLAGYLA) is a signal peptide. Residues 315-337 (ENDRKGPPTSDSELPKDKFSQAN) are disordered.

This sequence belongs to the heat shock protein 70 family. As to quaternary structure, binds UBQLN2.

It is found in the microsome. The protein localises to the endoplasmic reticulum. Has peptide-independent ATPase activity. The sequence is that of Heat shock 70 kDa protein 13 (HSPA13) from Bos taurus (Bovine).